A 174-amino-acid polypeptide reads, in one-letter code: MSKIIVASANPAKISAVASAFSQAFPEQSFTVEGISVASEVRDQPLCADETLLGARNRVKNARKLQADADFYVGLEAGIDGGFTFAWMVIENHKQRGEARSASLPLPPIALEKIQQGIELGDVMDDMFNQQNVKQKGGAIAMLTNHTLSRSSVYQQALILALIPFMNEQWFPCR.

Asp-68 contributes to the Mg(2+) binding site. Position 68 to 69 (68 to 69 (DA)) interacts with substrate.

Belongs to the YjjX NTPase family. Homodimer. Requires Mg(2+) as cofactor. The cofactor is Mn(2+).

The enzyme catalyses XTP + H2O = XDP + phosphate + H(+). It carries out the reaction ITP + H2O = IDP + phosphate + H(+). Phosphatase that hydrolyzes non-canonical purine nucleotides such as XTP and ITP to their respective diphosphate derivatives. Probably excludes non-canonical purines from DNA/RNA precursor pool, thus preventing their incorporation into DNA/RNA and avoiding chromosomal lesions. The polypeptide is Inosine/xanthosine triphosphatase (Photobacterium profundum (strain SS9)).